Here is a 126-residue protein sequence, read N- to C-terminus: Probable prefoldin subunit 6 (126 aa).

The protein belongs to the prefoldin subunit beta family. Heterohexamer of two PFD-alpha type and four PFD-beta type subunits. In terms of tissue distribution, expressed in embryonic blastomeres and gonads.

The protein resides in the cytoplasm. Its function is as follows. Binds specifically to cytosolic chaperonin (c-CPN) and transfers target proteins to it. Binds to nascent polypeptide chain and promotes folding in an environment in which there are many competing pathways for nonnative proteins. Required for positioning of the mitotic spindle. This Caenorhabditis elegans protein is Probable prefoldin subunit 6 (pfd-6).